A 500-amino-acid polypeptide reads, in one-letter code: Glycerol kinase (500 aa).

Thr14 contributes to the ADP binding site. Residues Thr14, Thr15, and Ser16 each coordinate ATP. Residue Thr14 participates in sn-glycerol 3-phosphate binding. Arg18 is a binding site for ADP. Positions 84, 85, and 136 each coordinate sn-glycerol 3-phosphate. Residues Arg84, Glu85, and Tyr136 each coordinate glycerol. Phosphohistidine; by HPr is present on His232. Residue Asp246 participates in sn-glycerol 3-phosphate binding. Glycerol is bound by residues Asp246 and Gln247. ADP-binding residues include Thr268 and Gly311. Positions 268, 311, 315, and 412 each coordinate ATP. 2 residues coordinate ADP: Gly412 and Asn416.

This sequence belongs to the FGGY kinase family. Homotetramer and homodimer (in equilibrium). Post-translationally, the phosphoenolpyruvate-dependent sugar phosphotransferase system (PTS), including enzyme I, and histidine-containing protein (HPr) are required for the phosphorylation, which leads to the activation of the enzyme.

The catalysed reaction is glycerol + ATP = sn-glycerol 3-phosphate + ADP + H(+). It participates in polyol metabolism; glycerol degradation via glycerol kinase pathway; sn-glycerol 3-phosphate from glycerol: step 1/1. Its activity is regulated as follows. Activated by phosphorylation and inhibited by fructose 1,6-bisphosphate (FBP). Functionally, key enzyme in the regulation of glycerol uptake and metabolism. Catalyzes the phosphorylation of glycerol to yield sn-glycerol 3-phosphate. This Limosilactobacillus reuteri (strain DSM 20016) (Lactobacillus reuteri) protein is Glycerol kinase.